The primary structure comprises 120 residues: Host cell factor C1 regulator 1 (120 aa).

Residues 1 to 30 (MILQQPLERGPPSRDPRATTGVTRGLNASL) form a disordered region. Positions 20 to 30 (TGVTRGLNASL) are enriched in polar residues. Positions 58–61 (DHPY) are interaction with HCFC1. Residues 92–101 (IPEALRLLRL) carry the Nuclear export signal motif.

As to quaternary structure, interacts with HCFC1.

The protein localises to the cytoplasm. It is found in the nucleus. In terms of biological role, regulates HCFC1 activity by modulating its subcellular localization. Overexpression of HCFC1R1 leads to accumulation of HCFC1 in the cytoplasm. HCFC1R1-mediated export may provide the pool of cytoplasmic HCFC1 required for import of virion-derived VP16 into the nucleus. In Mus musculus (Mouse), this protein is Host cell factor C1 regulator 1 (Hcfc1r1).